The following is a 282-amino-acid chain: Bifunctional protein FolD (282 aa).

Residues 165–167 (GRS), serine 190, and threonine 231 contribute to the NADP(+) site.

The protein belongs to the tetrahydrofolate dehydrogenase/cyclohydrolase family. As to quaternary structure, homodimer.

The catalysed reaction is (6R)-5,10-methylene-5,6,7,8-tetrahydrofolate + NADP(+) = (6R)-5,10-methenyltetrahydrofolate + NADPH. The enzyme catalyses (6R)-5,10-methenyltetrahydrofolate + H2O = (6R)-10-formyltetrahydrofolate + H(+). It functions in the pathway one-carbon metabolism; tetrahydrofolate interconversion. Its function is as follows. Catalyzes the oxidation of 5,10-methylenetetrahydrofolate to 5,10-methenyltetrahydrofolate and then the hydrolysis of 5,10-methenyltetrahydrofolate to 10-formyltetrahydrofolate. The chain is Bifunctional protein FolD from Clostridium botulinum (strain Eklund 17B / Type B).